Reading from the N-terminus, the 97-residue chain is Large ribosomal subunit protein uL23 (97 aa).

It belongs to the universal ribosomal protein uL23 family. In terms of assembly, part of the 50S ribosomal subunit. Contacts protein L29, and trigger factor when it is bound to the ribosome.

Its function is as follows. One of the early assembly proteins it binds 23S rRNA. One of the proteins that surrounds the polypeptide exit tunnel on the outside of the ribosome. Forms the main docking site for trigger factor binding to the ribosome. The sequence is that of Large ribosomal subunit protein uL23 from Rhizobium rhizogenes (strain K84 / ATCC BAA-868) (Agrobacterium radiobacter).